The following is a 365-amino-acid chain: MADFVKLSIFGTVFEVTTRYVDLQPVGMGAFGLVCSAKDQLSGTSVAIKKIMKPFSTPVLSKRTYRELKLLKHLRHENIISLSDIFISPLEDIYFVTELLGTDLHRLLTSRPLEKQFIQYFLYQILRGLKYVHSAGVVHRDLKPSNILVNENCDLKICDFGLARIQDPQMTGYVSTRYYRAPEIMLTWQKYDVAVDIWSTGCIFAEMLEGKPLFPGKDHVNQFSIITELLGTPPDDVIQTIASENTLRFVQSLPKREKVPFSTKFPNADPVSLDLLEKMLVFDPRTRISAAEGLAHEYLAPYHDPTDEPVAAEVFDWSFNDADLPVDTWKVMMYSEILDFHNLGDISQNEAEGPVTGEVPAAPAS.

The 280-residue stretch at tyrosine 20 to leucine 299 folds into the Protein kinase domain. ATP is bound by residues valine 26–valine 34 and lysine 49. The active-site Proton acceptor is aspartate 141. Position 171 is a phosphothreonine (threonine 171). The TXY signature appears at threonine 171 to tyrosine 173. Tyrosine 173 is modified (phosphotyrosine).

It belongs to the protein kinase superfamily. Ser/Thr protein kinase family. MAP kinase subfamily. HOG1 sub-subfamily. Requires Mg(2+) as cofactor. Post-translationally, dually phosphorylated on Thr-171 and Tyr-173, which activates the enzyme. Phosphorylated by PBS2 after osmotic stress.

Its subcellular location is the cytoplasm. It is found in the nucleus. The enzyme catalyses L-seryl-[protein] + ATP = O-phospho-L-seryl-[protein] + ADP + H(+). It carries out the reaction L-threonyl-[protein] + ATP = O-phospho-L-threonyl-[protein] + ADP + H(+). Activated by tyrosine and threonine phosphorylation. Proline-directed serine/threonine-protein kinase involved in a signal transduction pathway that is activated by changes in the osmolarity of the extracellular environment. Controls osmotic regulation of transcription of target genes. Also involved in the response to UV radiation and mediates the sensitivity to fludioxonil, an agricultural fungicide. This chain is Mitogen-activated protein kinase HOG1 (HOG1), found in Cryptococcus neoformans var. neoformans serotype D (strain B-3501A) (Filobasidiella neoformans).